Consider the following 342-residue polypeptide: Serpentine receptor class r-10 (342 aa).

At 1–11 (MTGELWLTLVD) the chain is on the extracellular side. A helical membrane pass occupies residues 12-32 (TADIVGFSMTFCVNIVLLFLL). The Cytoplasmic segment spans residues 33 to 38 (KNRGKN). Residues 39-59 (LGTYKHLMAFFSVFSIFYAII) form a helical membrane-spanning segment. Topologically, residues 60-92 (ESILRPIMHIENATFFLISRKRFNYSTRLGKIN) are extracellular. Residues N71 and N83 are each glycosylated (N-linked (GlcNAc...) asparagine). A helical membrane pass occupies residues 93 to 113 (SAFYCACFATSFVVSGVHFVY). Residues 114 to 131 (RFFASCKPHLLRSFNMPY) are Cytoplasmic-facing. The chain crosses the membrane as a helical span at residues 132 to 152 (LLLWPLGCSIPVMMWASVSYF). At 153–202 (LYPDTAFTEAAVTNVLNTHYHSIKKDNVSYIAYVYYQYDENGVRYVYLKN) the chain is on the extracellular side. The N-linked (GlcNAc...) asparagine glycan is linked to N179. The helical transmembrane segment at 203 to 223 (LLGCFVHYFVMSATFVVMFIC) threads the bilayer. The Cytoplasmic segment spans residues 224–257 (GYLTWKTMRKHKTASDRTRQLQKQLFKALVLQTL). The chain crosses the membrane as a helical span at residues 258–278 (IPTIFMYAPTGVMFIAPFFSI). The Extracellular segment spans residues 279 to 285 (NLNANAN). A helical membrane pass occupies residues 286-306 (FIVFCSFLYPGLDPLILILII). The Cytoplasmic segment spans residues 307–342 (RDFRQTVFKFFCLRKKNSVDESRSTTRANMSQVATH).

This sequence belongs to the nematode receptor-like protein str family. In terms of assembly, interacts with odr-4.

Its subcellular location is the cell projection. The protein localises to the cilium membrane. Its function is as follows. An odorant receptor which affects chemotaxis to the volatile odorant diacetyl. Specifies AWA neuronal cell fate via the odr-7 pathway. This chain is Serpentine receptor class r-10, found in Caenorhabditis briggsae.